A 421-amino-acid polypeptide reads, in one-letter code: Gamma-glutamyl phosphate reductase (421 aa).

The protein belongs to the gamma-glutamyl phosphate reductase family.

The protein resides in the cytoplasm. It catalyses the reaction L-glutamate 5-semialdehyde + phosphate + NADP(+) = L-glutamyl 5-phosphate + NADPH + H(+). The protein operates within amino-acid biosynthesis; L-proline biosynthesis; L-glutamate 5-semialdehyde from L-glutamate: step 2/2. Catalyzes the NADPH-dependent reduction of L-glutamate 5-phosphate into L-glutamate 5-semialdehyde and phosphate. The product spontaneously undergoes cyclization to form 1-pyrroline-5-carboxylate. The sequence is that of Gamma-glutamyl phosphate reductase from Roseobacter denitrificans (strain ATCC 33942 / OCh 114) (Erythrobacter sp. (strain OCh 114)).